A 154-amino-acid chain; its full sequence is UPF0225 protein SG1365 (154 aa).

The protein belongs to the UPF0225 family.

In Sodalis glossinidius (strain morsitans), this protein is UPF0225 protein SG1365.